A 649-amino-acid chain; its full sequence is Threonine--tRNA ligase (649 aa).

Positions 1–60 (MHVVLPDGKQLELPMGATALDAASAIGPRLAQDALAATANGELVDLMTPLPDGASITLIT) constitute a TGS domain. The tract at residues 248–544 (DHRKLGRELE…LIEHYAGDFP (297 aa)) is catalytic. Cys-341, His-392, and His-521 together coordinate Zn(2+).

It belongs to the class-II aminoacyl-tRNA synthetase family. Homodimer. Zn(2+) serves as cofactor.

It is found in the cytoplasm. The catalysed reaction is tRNA(Thr) + L-threonine + ATP = L-threonyl-tRNA(Thr) + AMP + diphosphate + H(+). In terms of biological role, catalyzes the attachment of threonine to tRNA(Thr) in a two-step reaction: L-threonine is first activated by ATP to form Thr-AMP and then transferred to the acceptor end of tRNA(Thr). Also edits incorrectly charged L-seryl-tRNA(Thr). The protein is Threonine--tRNA ligase of Deinococcus deserti (strain DSM 17065 / CIP 109153 / LMG 22923 / VCD115).